The sequence spans 197 residues: uncharacterized protein (197 aa).

6 consecutive transmembrane segments (helical) span residues 11–31 (AAMV…IPLI), 50–70 (ILAI…AYLG), 79–99 (AIVA…GLFA), 108–128 (AIVA…LGIM), 136–156 (ALKG…FIGL), and 158–178 (TLQI…AFHF).

This sequence belongs to the chromate ion transporter (CHR) (TC 2.A.51) family.

It is found in the cell membrane. This is an uncharacterized protein from Bacillus subtilis (strain 168).